Reading from the N-terminus, the 54-residue chain is MSPQTETKASVGFKAGVKDYKLTYYTPEYETKDTDILAAFRVTPQPGVPPEEAG.

Residues 1–2 (MS) constitute a propeptide that is removed on maturation. P3 is modified (N-acetylproline). K14 is subject to N6,N6,N6-trimethyllysine.

This sequence belongs to the RuBisCO large chain family. Type I subfamily. In terms of assembly, heterohexadecamer of 8 large chains and 8 small chains.

The protein localises to the plastid. The protein resides in the chloroplast. The catalysed reaction is 2 (2R)-3-phosphoglycerate + 2 H(+) = D-ribulose 1,5-bisphosphate + CO2 + H2O. It catalyses the reaction D-ribulose 1,5-bisphosphate + O2 = 2-phosphoglycolate + (2R)-3-phosphoglycerate + 2 H(+). RuBisCO catalyzes two reactions: the carboxylation of D-ribulose 1,5-bisphosphate, the primary event in carbon dioxide fixation, as well as the oxidative fragmentation of the pentose substrate in the photorespiration process. Both reactions occur simultaneously and in competition at the same active site. This Rhamnus cathartica (Common buckthorn) protein is Ribulose bisphosphate carboxylase large chain (rbcL).